The sequence spans 304 residues: uncharacterized protein (304 aa).

Coiled-coil stretches lie at residues 3-35 and 89-132; these read KNQY…DKEI and KSNK…NSNL. Residues 96-121 form a disordered region; sequence LQNKQQENSEEKNSEEKNSEEKNSEE.

This is an uncharacterized protein from Acanthamoeba polyphaga (Amoeba).